The sequence spans 64 residues: UPF0434 protein Bmul_0750/BMULJ_02510 (64 aa).

The protein belongs to the UPF0434 family.

This chain is UPF0434 protein Bmul_0750/BMULJ_02510, found in Burkholderia multivorans (strain ATCC 17616 / 249).